The primary structure comprises 384 residues: MTEMPKKKFSPRSARGDKPRYGEQKPKLKRSGDKPRFNDDQPQGFKEKSDRFQDKPRPRTNDDKPRRAGDKPSNFKSRFKDKDRDKPRYGDDRPRRSGQKPPFGKTFPAAPPPMDSEQAQEALDLLYGHHAVLAALDGDRQLNRIWITSHLRHDIRYRTKIQTAKANGTVVDEVDNFRLNQITHNANHQGIAAQVAPYHYWELGDLIDKAKSQSTAPVLIIIDSITDPHNLGAIIRTAEAFGAQGMVLPQRRVAGITSTVMKVAAGALEHFPVARVVNLSRALETLKESGFWIYGTVAGKQTALHQADLREPMGLVIGSEGEGLSLLTQKHCDHLITIPLAGKTPSLNASVAAAISLYEIFRQRGFDRPTLSHTASDLREVSED.

Positions 1–116 (MTEMPKKKFS…FPAAPPPMDS (116 aa)) are disordered. 2 stretches are compositionally biased toward basic and acidic residues: residues 14–70 (ARGD…RAGD) and 78–95 (RFKD…DRPR). Residues Gly-318, Ile-338, and Leu-347 each coordinate S-adenosyl-L-methionine.

Belongs to the class IV-like SAM-binding methyltransferase superfamily. RNA methyltransferase TrmH family.

This is an uncharacterized protein from Synechocystis sp. (strain ATCC 27184 / PCC 6803 / Kazusa).